A 464-amino-acid chain; its full sequence is ATP-dependent protease ATPase subunit HslU (464 aa).

Residues Ile19, 61–66 (GVGKTE), Asp277, Glu342, and Arg414 contribute to the ATP site.

It belongs to the ClpX chaperone family. HslU subfamily. In terms of assembly, a double ring-shaped homohexamer of HslV is capped on each side by a ring-shaped HslU homohexamer. The assembly of the HslU/HslV complex is dependent on binding of ATP.

Its subcellular location is the cytoplasm. Functionally, ATPase subunit of a proteasome-like degradation complex; this subunit has chaperone activity. The binding of ATP and its subsequent hydrolysis by HslU are essential for unfolding of protein substrates subsequently hydrolyzed by HslV. HslU recognizes the N-terminal part of its protein substrates and unfolds these before they are guided to HslV for hydrolysis. The polypeptide is ATP-dependent protease ATPase subunit HslU (Lactobacillus gasseri (strain ATCC 33323 / DSM 20243 / BCRC 14619 / CIP 102991 / JCM 1131 / KCTC 3163 / NCIMB 11718 / NCTC 13722 / AM63)).